The following is an 80-amino-acid chain: Exodeoxyribonuclease 7 small subunit (80 aa).

Belongs to the XseB family. As to quaternary structure, heterooligomer composed of large and small subunits.

It localises to the cytoplasm. The catalysed reaction is Exonucleolytic cleavage in either 5'- to 3'- or 3'- to 5'-direction to yield nucleoside 5'-phosphates.. Functionally, bidirectionally degrades single-stranded DNA into large acid-insoluble oligonucleotides, which are then degraded further into small acid-soluble oligonucleotides. In Maridesulfovibrio salexigens (strain ATCC 14822 / DSM 2638 / NCIMB 8403 / VKM B-1763) (Desulfovibrio salexigens), this protein is Exodeoxyribonuclease 7 small subunit.